We begin with the raw amino-acid sequence, 269 residues long: uncharacterized protein (269 aa).

Transmembrane regions (helical) follow at residues 21–43, 48–70, 121–143, 147–166, 205–227, and 242–264; these read LNVW…ILFT, LFLI…FSLI, YLIL…VFTF, FIIA…FWII, SLEV…LFQF, and FVAF…YLLW.

Its subcellular location is the cell membrane. This is an uncharacterized protein from Aquifex aeolicus (strain VF5).